We begin with the raw amino-acid sequence, 355 residues long: Beta-porphyranase C (355 aa).

Positions 1-18 are cleaved as a signal peptide; the sequence is MIKTLKRIPLVFLIAIMA. Cysteine 19 carries N-palmitoyl cysteine lipidation. A lipid anchor (S-diacylglycerol cysteine) is attached at cysteine 19. The segment at 22–72 is disordered; sequence SGDNGKDKVEEQEQAQEQGEKKGQGEERDKEDGIDGLQPTFLADQDPKPDD. The segment covering 39 to 54 has biased composition (basic and acidic residues); the sequence is QGEKKGQGEERDKEDG. One can recognise a GH16 domain in the interval 71 to 355; it reads DDKKWIKVEG…WVRVWQLEDL (285 aa). Substrate is bound by residues tryptophan 110, glutamate 208, and glutamate 213. The active-site Nucleophile is glutamate 208. Residue glutamate 213 is the Proton donor of the active site.

This sequence belongs to the glycosyl hydrolase 16 family.

It is found in the cell outer membrane. It carries out the reaction Hydrolysis of beta-D-galactopyranose-(1-&gt;4)-alpha-L-galactopyranose-6-sulfate linkages in porphyran.. Its function is as follows. Cleaves the sulfated polysaccharide porphyran at the (1-&gt;4) linkages between beta-D-galactopyranose and alpha-L-galactopyranose-6-sulfate, forming mostly the disaccharide alpha-L-galactopyranose-6-sulfate-(1-&gt;3)-beta-D-galactose. The chain is Beta-porphyranase C (porC) from Zobellia galactanivorans (strain DSM 12802 / CCUG 47099 / CIP 106680 / NCIMB 13871 / Dsij).